We begin with the raw amino-acid sequence, 365 residues long: DNA repair protein rhp51 (365 aa).

Residues 1-25 (MADTEVEMQVSAADTNNNENGQAQS) form a disordered region. Residues 12 to 25 (AADTNNNENGQAQS) show a composition bias toward polar residues. An ATP-binding site is contributed by 149–156 (GEFRTGKS).

The protein belongs to the RecA family. RAD51 subfamily. As to quaternary structure, interacts with rad22, rad54, rdh54, rhp54, rti1, swi2 and swi5. Forms homooiligomers.

Its subcellular location is the nucleus. Functionally, required both for recombination and for the repair of DNA damage caused by X-rays. Binds to single and double-stranded DNA, in the presence of magnesium, and exhibits DNA-dependent ATPase activity. Promotes DNA strand annealing and strand exchange via DNA recombinase activity and forms helical nucleoprotein filaments. This Schizosaccharomyces pombe (strain 972 / ATCC 24843) (Fission yeast) protein is DNA repair protein rhp51 (rhp51).